The chain runs to 438 residues: Chromosomal replication initiator protein DnaA (438 aa).

Residues 1 to 71 form a domain I, interacts with DnaA modulators region; the sequence is MTTKEFLTII…CFEIYDGSKP (71 aa). The tract at residues 71–100 is domain II; the sequence is PTIEIKLSNEKKSKKEILKEQTQNESTEST. The interval 101 to 315 is domain III, AAA+ region; that stretch reads ILNPSYTFDS…GVLIRINASA (215 aa). ATP-binding residues include Gly145, Gly147, Lys148, and Thr149. A domain IV, binds dsDNA region spans residues 316-438; that stretch reads SLLNQEITLP…LKNKIINSRE (123 aa).

Belongs to the DnaA family. As to quaternary structure, oligomerizes as a right-handed, spiral filament on DNA at oriC.

Its subcellular location is the cytoplasm. Its function is as follows. Plays an essential role in the initiation and regulation of chromosomal replication. ATP-DnaA binds to the origin of replication (oriC) to initiate formation of the DNA replication initiation complex once per cell cycle. Binds the DnaA box (a 9 base pair repeat at the origin) and separates the double-stranded (ds)DNA. Forms a right-handed helical filament on oriC DNA; dsDNA binds to the exterior of the filament while single-stranded (ss)DNA is stabiized in the filament's interior. The ATP-DnaA-oriC complex binds and stabilizes one strand of the AT-rich DNA unwinding element (DUE), permitting loading of DNA polymerase. After initiation quickly degrades to an ADP-DnaA complex that is not apt for DNA replication. Binds acidic phospholipids. In Aliarcobacter butzleri (strain RM4018) (Arcobacter butzleri), this protein is Chromosomal replication initiator protein DnaA.